Reading from the N-terminus, the 172-residue chain is Dual-action ribosomal maturation protein DarP (172 aa).

Belongs to the DarP family.

It localises to the cytoplasm. In terms of biological role, member of a network of 50S ribosomal subunit biogenesis factors which assembles along the 30S-50S interface, preventing incorrect 23S rRNA structures from forming. Promotes peptidyl transferase center (PTC) maturation. This is Dual-action ribosomal maturation protein DarP from Ectopseudomonas mendocina (strain ymp) (Pseudomonas mendocina).